The primary structure comprises 149 residues: 3-dehydroquinate dehydratase (149 aa).

Residue Tyr26 is the Proton acceptor of the active site. Residues Asn75, His81, and Asp88 each contribute to the substrate site. Residue His101 is the Proton donor of the active site. Substrate contacts are provided by residues 102–103 and Arg112; that span reads LS.

Belongs to the type-II 3-dehydroquinase family. As to quaternary structure, homododecamer.

The enzyme catalyses 3-dehydroquinate = 3-dehydroshikimate + H2O. The protein operates within metabolic intermediate biosynthesis; chorismate biosynthesis; chorismate from D-erythrose 4-phosphate and phosphoenolpyruvate: step 3/7. Its function is as follows. Catalyzes a trans-dehydration via an enolate intermediate. In Shewanella woodyi (strain ATCC 51908 / MS32), this protein is 3-dehydroquinate dehydratase.